A 138-amino-acid polypeptide reads, in one-letter code: Ribosomal RNA large subunit methyltransferase H (138 aa).

Residues Gly86 and 105 to 110 each bind S-adenosyl-L-methionine; that span reads LSPLTF.

It belongs to the RNA methyltransferase RlmH family. As to quaternary structure, homodimer.

The protein resides in the cytoplasm. It carries out the reaction pseudouridine(1915) in 23S rRNA + S-adenosyl-L-methionine = N(3)-methylpseudouridine(1915) in 23S rRNA + S-adenosyl-L-homocysteine + H(+). In terms of biological role, specifically methylates the pseudouridine at position 1915 (m3Psi1915) in 23S rRNA. The polypeptide is Ribosomal RNA large subunit methyltransferase H (Prochlorococcus marinus (strain MIT 9215)).